We begin with the raw amino-acid sequence, 207 residues long: Thiamine-phosphate synthase (207 aa).

4-amino-2-methyl-5-(diphosphooxymethyl)pyrimidine contacts are provided by residues 38–42 (QYRAK) and asparagine 70. Mg(2+) contacts are provided by aspartate 71 and aspartate 90. Threonine 109 serves as a coordination point for 4-amino-2-methyl-5-(diphosphooxymethyl)pyrimidine. 135–137 (TNS) lines the 2-[(2R,5Z)-2-carboxy-4-methylthiazol-5(2H)-ylidene]ethyl phosphate pocket. Lysine 138 lines the 4-amino-2-methyl-5-(diphosphooxymethyl)pyrimidine pocket. Residues glycine 165 and 185 to 186 (IS) each bind 2-[(2R,5Z)-2-carboxy-4-methylthiazol-5(2H)-ylidene]ethyl phosphate.

It belongs to the thiamine-phosphate synthase family. It depends on Mg(2+) as a cofactor.

The catalysed reaction is 2-[(2R,5Z)-2-carboxy-4-methylthiazol-5(2H)-ylidene]ethyl phosphate + 4-amino-2-methyl-5-(diphosphooxymethyl)pyrimidine + 2 H(+) = thiamine phosphate + CO2 + diphosphate. It catalyses the reaction 2-(2-carboxy-4-methylthiazol-5-yl)ethyl phosphate + 4-amino-2-methyl-5-(diphosphooxymethyl)pyrimidine + 2 H(+) = thiamine phosphate + CO2 + diphosphate. The enzyme catalyses 4-methyl-5-(2-phosphooxyethyl)-thiazole + 4-amino-2-methyl-5-(diphosphooxymethyl)pyrimidine + H(+) = thiamine phosphate + diphosphate. It functions in the pathway cofactor biosynthesis; thiamine diphosphate biosynthesis; thiamine phosphate from 4-amino-2-methyl-5-diphosphomethylpyrimidine and 4-methyl-5-(2-phosphoethyl)-thiazole: step 1/1. In terms of biological role, condenses 4-methyl-5-(beta-hydroxyethyl)thiazole monophosphate (THZ-P) and 2-methyl-4-amino-5-hydroxymethyl pyrimidine pyrophosphate (HMP-PP) to form thiamine monophosphate (TMP). This is Thiamine-phosphate synthase from Clostridium perfringens (strain 13 / Type A).